A 187-amino-acid polypeptide reads, in one-letter code: Putative zinc finger protein 833 (187 aa).

6 consecutive C2H2-type zinc fingers follow at residues 10–32 (YKCK…ERTH), 38–60 (YECN…ARIH), 66–88 (YICK…ENTH), 94–116 (CECK…ERIH), 122–144 (YKCK…KSTH), and 150–172 (YECK…EGVH).

In Homo sapiens (Human), this protein is Putative zinc finger protein 833 (ZNF833P).